Consider the following 181-residue polypeptide: Glutamyl-tRNA(Gln) amidotransferase subunit C, chloroplastic/mitochondrial (181 aa).

This sequence belongs to the GatC family. As to quaternary structure, subunit of the heterotrimeric GatCAB amidotransferase (AdT) complex, composed of A, B and C subunits.

The protein resides in the mitochondrion. It is found in the plastid. The protein localises to the chloroplast. It carries out the reaction L-glutamyl-tRNA(Gln) + L-glutamine + ATP + H2O = L-glutaminyl-tRNA(Gln) + L-glutamate + ADP + phosphate + H(+). Functionally, allows the formation of correctly charged Gln-tRNA(Gln) through the transamidation of misacylated Glu-tRNA(Gln) in chloroplasts and mitochondria. The reaction takes place in the presence of glutamine and ATP through an activated gamma-phospho-Glu-tRNA(Gln). The protein is Glutamyl-tRNA(Gln) amidotransferase subunit C, chloroplastic/mitochondrial of Picea sitchensis (Sitka spruce).